We begin with the raw amino-acid sequence, 528 residues long: (R)-citramalate synthase (528 aa).

Positions valine 5–threonine 271 constitute a Pyruvate carboxyltransferase domain.

It belongs to the alpha-IPM synthase/homocitrate synthase family.

The catalysed reaction is pyruvate + acetyl-CoA + H2O = (3R)-citramalate + CoA + H(+). Its pathway is amino-acid biosynthesis; L-isoleucine biosynthesis; 2-oxobutanoate from pyruvate: step 1/3. Catalyzes the condensation of pyruvate and acetyl-coenzyme A to form (R)-citramalate. This is (R)-citramalate synthase from Aquifex aeolicus (strain VF5).